A 617-amino-acid polypeptide reads, in one-letter code: Autophagy-related protein 20 (617 aa).

The disordered stretch occupies residues 1–83 (MWNDEDNNPY…KRKPGGYDSR (83 aa)). Over residues 20-31 (QSSSINPTSPST) the composition is skewed to low complexity. The segment covering 48–58 (DNEHNHGVIHD) has biased composition (basic and acidic residues). Acidic residues predominate over residues 59 to 68 (DSDDDDEDLT). A PX domain is found at 89–209 (YENPKLSILI…RFFDPNASWS (121 aa)). A 1,2-diacyl-sn-glycero-3-phospho-(1D-myo-inositol-3-phosphate) is bound by residues R126, S128, K152, and R175. Residues 403–440 (QQDLTTEELSKKRALLDQLEQSEAEARRIENYLSSSQQ) are a coiled coil. The disordered stretch occupies residues 434–516 (YLSSSQQISP…SGNSITNKIF (83 aa)). The segment covering 454 to 463 (PPSHQRRDGS) has biased composition (basic and acidic residues). Residues 480 to 500 (DFSSHTPSASQGLPERSTSVP) are compositionally biased toward polar residues.

It belongs to the sorting nexin family. In terms of assembly, forms a complex with SNX4/ATG24 and ATG17.

It localises to the endosome membrane. Its subcellular location is the preautophagosomal structure membrane. Functionally, required for cytoplasm to vacuole transport (Cvt), pexophagy and mitophagy. Also involved in endoplasmic reticulum-specific autophagic process and is essential for the survival of cells subjected to severe ER stress. Functions in protein retrieval from the endocytic pathway. Required for proper sorting of the v-SNARE protein SNC1. Autophagy is required for proper vegetative growth, asexual/sexual reproduction, and full virulence. Autophagy is particularly involved in the biosynthesis of deoxynivalenol (DON), an important virulence determinant. The chain is Autophagy-related protein 20 from Gibberella zeae (strain ATCC MYA-4620 / CBS 123657 / FGSC 9075 / NRRL 31084 / PH-1) (Wheat head blight fungus).